A 757-amino-acid chain; its full sequence is Transferrin receptor protein 1 (757 aa).

At 1-67 (MMDQARSAIS…KHRRLNGRLC (67 aa)) the chain is on the cytoplasmic side. Residues 1–67 (MMDQARSAIS…KHRRLNGRLC (67 aa)) form a mediates interaction with SH3BP4 region. Residues Ser-10 and Ser-19 each carry the phosphoserine modification. The residue at position 20 (Tyr-20) is a Phosphotyrosine. An Endocytosis signal motif is present at residues 20–23 (YTRF). The residue at position 21 (Thr-21) is a Phosphothreonine. Position 24 is a phosphoserine (Ser-24). A Stop-transfer sequence motif is present at residues 58 to 61 (KHRR). Cys-67 carries S-palmitoyl cysteine lipidation. Residues 68-88 (FGTIAVVIFFLIGFMIGYLGY) form a helical; Signal-anchor for type II membrane protein membrane-spanning segment. Over 89–757 (CKRTEQKDCV…GDIWDIDNEF (669 aa)) the chain is Extracellular. O-linked (GalNAc...) threonine glycosylation occurs at Thr-103. The PA domain maps to 220-310 (SKATTVSGKL…GTGDPYTPGF (91 aa)). Residues Asn-248 and Asn-314 are each glycosylated (N-linked (GlcNAc...) asparagine). The interval 566–757 (NLDTYEKLIQ…GDIWDIDNEF (192 aa)) is ligand-binding. The Cell attachment site motif lies at 643–645 (RGD). Asn-719 and Asn-724 each carry an N-linked (GlcNAc...) asparagine glycan.

This sequence belongs to the peptidase M28 family. M28B subfamily. In terms of assembly, homodimer; disulfide-linked. Binds one transferrin molecule per subunit. Interacts with SH3BP4. Interacts with STEAP3; facilitates TFRC endocytosis in erythroid precursor cells. In terms of processing, stearoylated by ZDHHC6 which inhibits TFRC-mediated activation of the JNK pathway and promotes mitochondrial fragmentation. Stearoylation does not affect iron uptake. Post-translationally, N- and O-glycosylated, phosphorylated and palmitoylated.

The protein resides in the cell membrane. The protein localises to the melanosome. In terms of biological role, cellular uptake of iron occurs via receptor-mediated endocytosis of ligand-occupied transferrin receptor into specialized endosomes. Endosomal acidification leads to iron release. The apotransferrin-receptor complex is then recycled to the cell surface with a return to neutral pH and the concomitant loss of affinity of apotransferrin for its receptor. Transferrin receptor is necessary for development of erythrocytes and the nervous system. Positively regulates T and B cell proliferation through iron uptake. Acts as a lipid sensor that regulates mitochondrial fusion by regulating activation of the JNK pathway. When dietary levels of stearate (C18:0) are low, promotes activation of the JNK pathway, resulting in HUWE1-mediated ubiquitination and subsequent degradation of the mitofusin MFN2 and inhibition of mitochondrial fusion. When dietary levels of stearate (C18:0) are high, TFRC stearoylation inhibits activation of the JNK pathway and thus degradation of the mitofusin MFN2. Mediates uptake of NICOL1 into fibroblasts where it may regulate extracellular matrix production. The sequence is that of Transferrin receptor protein 1 (TFRC) from Cricetulus griseus (Chinese hamster).